Here is a 102-residue protein sequence, read N- to C-terminus: Citrate lyase acyl carrier protein (102 aa).

Serine 14 carries the O-(phosphoribosyl dephospho-coenzyme A)serine modification.

The protein belongs to the CitD family. In terms of assembly, oligomer with a subunit composition of (alpha,beta,gamma)6.

The protein localises to the cytoplasm. Its function is as follows. Covalent carrier of the coenzyme of citrate lyase. This chain is Citrate lyase acyl carrier protein, found in Streptococcus pyogenes serotype M2 (strain MGAS10270).